The following is a 999-amino-acid chain: Probable beta-galactosidase C (999 aa).

The first 21 residues, 1–21 (MFFFRFLTTVLLLFNAKLLVA), serve as a signal peptide directing secretion. An N-linked (GlcNAc...) asparagine glycan is attached at Asn-25. Substrate is bound by residues Tyr-80, Asn-125, Glu-127, and Asn-185. Glu-186 acts as the Proton donor in catalysis. A glycan (N-linked (GlcNAc...) asparagine) is linked at Asn-195. Position 249 (Tyr-249) interacts with substrate. A disulfide bridge connects residues Cys-255 and Cys-302. Asn-274 is a glycosylation site (N-linked (GlcNAc...) asparagine). Catalysis depends on Glu-285, which acts as the Nucleophile. Tyr-351 is a binding site for substrate. Asn-389, Asn-441, Asn-512, Asn-519, Asn-600, Asn-675, Asn-713, Asn-757, Asn-808, and Asn-897 each carry an N-linked (GlcNAc...) asparagine glycan.

It belongs to the glycosyl hydrolase 35 family.

The protein localises to the secreted. It carries out the reaction Hydrolysis of terminal non-reducing beta-D-galactose residues in beta-D-galactosides.. Cleaves beta-linked terminal galactosyl residues from gangliosides, glycoproteins, and glycosaminoglycans. The protein is Probable beta-galactosidase C (lacC) of Talaromyces marneffei (strain ATCC 18224 / CBS 334.59 / QM 7333) (Penicillium marneffei).